Here is a 473-residue protein sequence, read N- to C-terminus: O-methyltransferase aclU (473 aa).

Residues D320 and 354–356 (GDF) each bind S-adenosyl-L-methionine. The active-site Proton acceptor is the H373.

The protein belongs to the class I-like SAM-binding methyltransferase superfamily. Cation-independent O-methyltransferase family. COMT subfamily.

The protein operates within mycotoxin biosynthesis. O-methyltransferase; part of the gene cluster that mediates the biosynthesis of aspirochlorine (or antibiotic A30641), an unusual halogenated spiro compound with distinctive antifungal properties due to selective inhibition of protein biosynthesis, and which is also active against bacteria, viruses, and murine tumor cells. The non-ribosomal peptide synthetase (NRPS) aclP is responsible the formation of the diketopiperazine (DKP) core from the condensation of 2 phenylalanine residues. One Phe residue is tailored into chlorotyrosine by hydroxylation and chlorination, whereas the second Phe undergoes an unprecedented C-C bond cleavage to be converted into glycine. After formation of the DKP, sulfur is incorporated into the DKP by conjugation with glutathione by aclG, followed by its stepwise degradation to the thiol by aclI, aclJ and aclK, and the dithiol oxidation by aclT. In addition, oxygenases (aclB, aclC, aclL and aclO) and O-methyltransferases (aclM and aclU) act as tailoring enzymes to produce the intermediate dechloroaspirochlorine. Ultimately, chlorination of dechloroaspirochlorine by the halogenase aclH is the last step in the aspirochlorine pathway. The polypeptide is O-methyltransferase aclU (Aspergillus oryzae (strain ATCC 42149 / RIB 40) (Yellow koji mold)).